The primary structure comprises 449 residues: Monoacylglycerol lipase (449 aa).

Lysine 82 participates in a covalent cross-link: Glycyl lysine isopeptide (Lys-Gly) (interchain with G-Cter in ubiquitin). An AB hydrolase-1 domain is found at 151 to 392 (PMLIILHGLT…LLLETSTGGH (242 aa)). A GXSXG motif is present at residues 230 to 234 (GFSLG). Residue serine 232 is the Nucleophile of the active site. Active-site charge relay system residues include aspartate 364 and histidine 392.

It belongs to the AB hydrolase superfamily. AB hydrolase 4 family.

The enzyme catalyses Hydrolyzes glycerol monoesters of long-chain fatty acids.. The catalysed reaction is 1-hexadecanoylglycerol + H2O = glycerol + hexadecanoate + H(+). It carries out the reaction 1-octadecanoylglycerol + H2O = octadecanoate + glycerol + H(+). It catalyses the reaction 1-(9Z-octadecenoyl)-glycerol + H2O = glycerol + (9Z)-octadecenoate + H(+). In terms of biological role, converts monoacylglycerides (MAG) to free fatty acids and glycerol. Has a preference for palmitoyl-MAG. Does not play a significant role in ethyl ester biosynthesis. Also possesses ester hydrolase and low but persistent TAG lipase activity. The sequence is that of Monoacylglycerol lipase from Saccharomyces cerevisiae (strain ATCC 204508 / S288c) (Baker's yeast).